A 424-amino-acid polypeptide reads, in one-letter code: Piriformospora indica-insensitive protein 2 (424 aa).

Positions 1–21 (MLWQTFFSSLLLLSLLFGCNG) are cleaved as a signal peptide. LRR repeat units follow at residues 141–166 (ASNL…IGNL), 167–190 (TKLK…ICNL), 191–213 (KRLK…CFKG), 214–237 (LKEL…SFGD), 238–263 (LVSL…GFLK), 265–286 (LTLL…IENI), 287–311 (QSLT…NWGK), 312–336 (MSNL…LTNL), 337–360 (KRLR…KLEA), and 362–387 (PCLG…FYEK).

It localises to the cell membrane. In terms of biological role, required for growth promotion and enhanced seed production mediated by the endophytic fungus Piriformospora indica. This chain is Piriformospora indica-insensitive protein 2 (PII-2), found in Arabidopsis thaliana (Mouse-ear cress).